The primary structure comprises 125 residues: Aspartate 1-decarboxylase (125 aa).

The active-site Schiff-base intermediate with substrate; via pyruvic acid is the serine 25. Serine 25 carries the pyruvic acid (Ser) modification. Threonine 57 is a substrate binding site. Tyrosine 58 (proton donor) is an active-site residue. 73–75 contributes to the substrate binding site; it reads GAA.

It belongs to the PanD family. As to quaternary structure, heterooctamer of four alpha and four beta subunits. Requires pyruvate as cofactor. Is synthesized initially as an inactive proenzyme, which is activated by self-cleavage at a specific serine bond to produce a beta-subunit with a hydroxyl group at its C-terminus and an alpha-subunit with a pyruvoyl group at its N-terminus.

The protein resides in the cytoplasm. It catalyses the reaction L-aspartate + H(+) = beta-alanine + CO2. Its pathway is cofactor biosynthesis; (R)-pantothenate biosynthesis; beta-alanine from L-aspartate: step 1/1. Functionally, catalyzes the pyruvoyl-dependent decarboxylation of aspartate to produce beta-alanine. In Herpetosiphon aurantiacus (strain ATCC 23779 / DSM 785 / 114-95), this protein is Aspartate 1-decarboxylase.